The sequence spans 265 residues: MKLLISNDDGISALGIRTLANALAEVGHDVTVVCPDRERSATGHGLTLHQPIRAEIVESIFHPAIKAWACDGTPSDCVKLALWALLDSPPDLVLSGINQGANLGTEILYSGTVSAAMEGMIEGIPSIAFSLTSHISRNFQPAAKFATILVEQLAAKPIPDLMLLNVNIPPVEWEEIAGVKLTRQGVRRYVDVFDKRTDPRGKTYYWLTGEVLEEVEPPEGLNLPQNVPIDVHAVKDNYISITPLQYNLTYATALDKLSNWNFPMS.

Positions 8, 9, 40, and 98 each coordinate a divalent metal cation.

It belongs to the SurE nucleotidase family. It depends on a divalent metal cation as a cofactor.

It is found in the cytoplasm. The enzyme catalyses a ribonucleoside 5'-phosphate + H2O = a ribonucleoside + phosphate. Nucleotidase that shows phosphatase activity on nucleoside 5'-monophosphates. The polypeptide is 5'-nucleotidase SurE (Trichormus variabilis (strain ATCC 29413 / PCC 7937) (Anabaena variabilis)).